Reading from the N-terminus, the 574-residue chain is Cell division cycle 7-related protein kinase (574 aa).

S27 carries the phosphoserine modification. One can recognise a Protein kinase domain in the interval 58–574; the sequence is FKIEDKIGEG…LHPFFKDMSL (517 aa). ATP-binding positions include 64–72 and K90; that span reads IGEGTFSSV. D177 serves as the catalytic Proton acceptor. Residue K268 forms a Glycyl lysine isopeptide (Lys-Gly) (interchain with G-Cter in SUMO2) linkage. Position 503 is a phosphothreonine (T503).

It belongs to the protein kinase superfamily. Ser/Thr protein kinase family. CDC7 subfamily. As to quaternary structure, forms a complex with either DBF4/DBF4A or DBF4B, leading to the activation of the kinase activity. Interacts with CLASPIN (via the acidic patch); the interaction is required for phosphorylation of MCM proteins and CLASPIN. Mg(2+) is required as a cofactor.

It is found in the nucleus. It catalyses the reaction L-seryl-[protein] + ATP = O-phospho-L-seryl-[protein] + ADP + H(+). The enzyme catalyses L-threonyl-[protein] + ATP = O-phospho-L-threonyl-[protein] + ADP + H(+). Kinase involved in initiation of DNA replication. Phosphorylates critical substrates that regulate the G1/S phase transition and initiation of DNA replication, such as MCM proteins and CLASPIN. This is Cell division cycle 7-related protein kinase from Homo sapiens (Human).